The following is a 566-amino-acid chain: NAD-dependent malic enzyme 3 (566 aa).

Residue Tyr105 is the Proton donor of the active site. Lys178 functions as the Proton acceptor in the catalytic mechanism. A divalent metal cation is bound by residues Glu249, Asp250, and Asp273. Residues 306–309, Asn423, and Asn468 each bind NAD(+); that span reads AGTA.

This sequence belongs to the malic enzymes family. The cofactor is Mg(2+). Requires Mn(2+) as cofactor.

The enzyme catalyses (S)-malate + NAD(+) = pyruvate + CO2 + NADH. It carries out the reaction oxaloacetate + H(+) = pyruvate + CO2. Its function is as follows. Catalyzes the decarboxylation of malate to pyruvate. Can use NAD and NADP, but with a strong preference for NAD. Can also catalyze the decarboxylation of oxaloacetate. Involved in keeping the ATP levels high. The chain is NAD-dependent malic enzyme 3 (malS) from Bacillus subtilis (strain 168).